We begin with the raw amino-acid sequence, 200 residues long: dTTP/UTP pyrophosphatase (200 aa).

Aspartate 72 acts as the Proton acceptor in catalysis.

This sequence belongs to the Maf family. YhdE subfamily. The cofactor is a divalent metal cation.

The protein localises to the cytoplasm. The catalysed reaction is dTTP + H2O = dTMP + diphosphate + H(+). The enzyme catalyses UTP + H2O = UMP + diphosphate + H(+). In terms of biological role, nucleoside triphosphate pyrophosphatase that hydrolyzes dTTP and UTP. May have a dual role in cell division arrest and in preventing the incorporation of modified nucleotides into cellular nucleic acids. The sequence is that of dTTP/UTP pyrophosphatase from Pseudomonas syringae pv. syringae (strain B728a).